A 144-amino-acid chain; its full sequence is 3-hydroxyacyl-[acyl-carrier-protein] dehydratase FabZ (144 aa).

Residue histidine 48 is part of the active site.

Belongs to the thioester dehydratase family. FabZ subfamily.

It is found in the cytoplasm. It carries out the reaction a (3R)-hydroxyacyl-[ACP] = a (2E)-enoyl-[ACP] + H2O. In terms of biological role, involved in unsaturated fatty acids biosynthesis. Catalyzes the dehydration of short chain beta-hydroxyacyl-ACPs and long chain saturated and unsaturated beta-hydroxyacyl-ACPs. The sequence is that of 3-hydroxyacyl-[acyl-carrier-protein] dehydratase FabZ from Bacillus licheniformis (strain ATCC 14580 / DSM 13 / JCM 2505 / CCUG 7422 / NBRC 12200 / NCIMB 9375 / NCTC 10341 / NRRL NRS-1264 / Gibson 46).